The following is an 87-amino-acid chain: Small ribosomal subunit protein bS20 (87 aa).

The disordered stretch occupies residues 1–23 (MANHKSAIKRHKQSVKRAARNRA).

The protein belongs to the bacterial ribosomal protein bS20 family.

Binds directly to 16S ribosomal RNA. The chain is Small ribosomal subunit protein bS20 from Oleidesulfovibrio alaskensis (strain ATCC BAA-1058 / DSM 17464 / G20) (Desulfovibrio alaskensis).